We begin with the raw amino-acid sequence, 171 residues long: Peptidyl-prolyl cis-trans isomerase 7 (171 aa).

Positions 7-170 (FFDITIAGKP…SECLIADCGQ (164 aa)) constitute a PPIase cyclophilin-type domain.

The protein belongs to the cyclophilin-type PPIase family.

It carries out the reaction [protein]-peptidylproline (omega=180) = [protein]-peptidylproline (omega=0). Functionally, PPIases accelerate the folding of proteins. It catalyzes the cis-trans isomerization of proline imidic peptide bonds in oligopeptides. This Caenorhabditis elegans protein is Peptidyl-prolyl cis-trans isomerase 7 (cyn-7).